The following is a 709-amino-acid chain: MKLFLLFTLTLVNIFSVSLQEPIQNQPAGNNTITSPHRNVWRALSEAEFSGVSAVLVHQLNLTTSRGGNRIIQIDYLYPNKSDVLLFLDHNGEEPKRYARATVQFGSPEVPYLQEYRIGPLPATNTTAVEPLRFPFNGKVQGKTKITSLDADGIDAFLPQLSSVVEDITRKLWNTTLAEGGVSFNLGKASFNSDSTQTIWLGFLNNATTGFDSSTLLPLGVSMQLDITSRDYNDWFVLYWFYNNKLYTPTSFNETVYSSDFQPPLANIDGPWTSTNKQEPTFLLDDLPPPKAISRGKNRYNLDTEENYVQWMDFSFYFSSHTDRGLSLFNVVYKSKRIIYELSLQEALAHYAGVEPVPSEAVYFDTQTGMGRSMISLIKGYDCPDYATYLNSSFSSRTGVTITPDAICLFESDSQFPLRRHTSQAFGYASAARNVVFTVRWIATVGNYDYLFDYDFFYDGAIEVKVRASGYIQGAYYAGNEEYGFKIHDALSGSMHDHVMTFKADLDIYGEKNSVQKVEVVPETTIYPWSQGQPHNTMKLNRGFVTSETDSSIDWAADDAISYTIVNKDSPNKYGEYPGYRFRRVAPAIHLTVKNSTSGGKALHYATHDLFITQQKDNEPCAADRNNAYNIDDPLVDFEKFLDGESLEQEDLVLWINMGMHHTPHTEDLPNTIMTSAYSGIRFEPFNYLESGDPSVKSAQQARIILSNS.

Residues 1-20 (MKLFLLFTLTLVNIFSVSLQ) form the signal peptide. Asp-365 acts as the Proton acceptor in catalysis. Cys-383 and Cys-408 are disulfide-bonded. Tyr-448 serves as the catalytic Schiff-base intermediate with substrate; via topaquinone. Residue Tyr-448 is modified to 2',4',5'-topaquinone. Cu cation contacts are provided by His-496 and His-498. Residues Asp-505, Leu-506, Asp-507, Glu-548, Phe-641, Glu-645, Asp-651, and Leu-652 each coordinate Ca(2+). His-662 is a Cu cation binding site.

This sequence belongs to the copper/topaquinone oxidase family. As to quaternary structure, homodimer; disulfide-linked. Cu cation is required as a cofactor. Ca(2+) serves as cofactor. The cofactor is L-topaquinone. Post-translationally, topaquinone (TPQ) is generated by copper-dependent autoxidation of a specific tyrosyl residue.

It functions in the pathway mycotoxin biosynthesis. In terms of biological role, copper amine oxidase, part of the gene cluster that mediates the biosynthesis of the secondary metabolite victorin, the molecular basis for Victoria blight of oats. Within the pathway, vicK1 catalyzes the oxidative deamination of the N-terminal glycyl moiety of the hexapeptides in order to produce the active glyoxylate form victorins. The pathway starts with the processing of the precursor vicA1 by several endopeptidases including kexin proteases as well as the cluster-specific S28 family peptidases vicPa and vicPb to produce 7 identical copies of the hexapeptide Gly-Leu-Lys-Leu-Ala-Phe. After being excised from the precursor peptide, the core peptides are cyclized and modified post-translationally by enzymes encoded within the gene cluster. The ustYa family oxidase vicYb is required for the formation of the macrocycle in victorin and the copper amine oxidases (CAOs) vicK1 and vicK2 are responsible for converting victorin to the active form by oxidizing the N-terminal glycyl residue in the peptides to glyoxylate. Relaxed substrate specificity of enzymes in the victorin biosynthetic pathway results in a metabolic grid that produces a set of analogs including victorinines B, C, E or HV-toxin M. This chain is Copper amine oxidase vicK1, found in Bipolaris victoriae (strain FI3) (Victoria blight of oats agent).